Reading from the N-terminus, the 325-residue chain is Flotillin-like protein FloA (325 aa).

A run of 2 helical transmembrane segments spans residues 4–24 and 26–46; these read LGIV…FSFI and VGLW…TLVA.

It belongs to the flotillin-like FloA family. In terms of assembly, homooligomerizes.

Its subcellular location is the cell membrane. The protein resides in the membrane raft. Found in functional membrane microdomains (FMM) that may be equivalent to eukaryotic membrane rafts. FMMs are highly dynamic and increase in number as cells age. Flotillins are thought to be important factors in membrane fluidity. The chain is Flotillin-like protein FloA from Thermus thermophilus (strain ATCC BAA-163 / DSM 7039 / HB27).